A 164-amino-acid polypeptide reads, in one-letter code: Putative 4-hydroxy-4-methyl-2-oxoglutarate aldolase (164 aa).

Substrate contacts are provided by residues 80–83 (GGNL) and Arg-102. Asp-103 provides a ligand contact to a divalent metal cation.

The protein belongs to the class II aldolase/RraA-like family. As to quaternary structure, homotrimer. It depends on a divalent metal cation as a cofactor.

The enzyme catalyses 4-hydroxy-4-methyl-2-oxoglutarate = 2 pyruvate. It catalyses the reaction oxaloacetate + H(+) = pyruvate + CO2. Its function is as follows. Catalyzes the aldol cleavage of 4-hydroxy-4-methyl-2-oxoglutarate (HMG) into 2 molecules of pyruvate. Also contains a secondary oxaloacetate (OAA) decarboxylase activity due to the common pyruvate enolate transition state formed following C-C bond cleavage in the retro-aldol and decarboxylation reactions. The chain is Putative 4-hydroxy-4-methyl-2-oxoglutarate aldolase from Burkholderia multivorans (strain ATCC 17616 / 249).